The primary structure comprises 87 residues: uncharacterized protein (87 aa).

The next 2 helical transmembrane spans lie at 8–28 and 47–67; these read IVVL…IFDL and LAGS…LIGL.

The protein resides in the cell membrane. This is an uncharacterized protein from Bacillus subtilis (strain 168).